The primary structure comprises 321 residues: Gap junction delta-2 protein (321 aa).

The Cytoplasmic segment spans residues 1–19 (MGEWTILERLLEAAVQQHS). The helical transmembrane segment at 20-42 (TMIGRILLTVVVIFRILIVAIVG) threads the bilayer. The Extracellular portion of the chain corresponds to 43–75 (ETVYDDEQTMFVCNTLQPGCNQACYDRAFPISH). A helical transmembrane segment spans residues 76-98 (IRYWVFQIIMVCTPSLCFITYSV). At 99–197 (HQSAKQRERR…KLRRQEGISR (99 aa)) the chain is on the cytoplasmic side. The interval 117-141 (DRDPPESMGGPGGTGGGGSGGGKRE) is disordered. Positions 125–137 (GGPGGTGGGGSGG) are enriched in gly residues. A helical transmembrane segment spans residues 198–220 (FYIIQVVFRNALEIGFLVGQYFL). Topologically, residues 221–252 (YGFSVPGLYECDRYPCIKEVECYVSRPTEKTV) are extracellular. A helical membrane pass occupies residues 253–275 (FLVFMFAVSGICVVLNLAELNHL). Over 276–321 (GWRKIKLAVRGAQAKRKSVYEIRNKDLPRVSVPNFGRTQSSDSAYV) the chain is Cytoplasmic.

It belongs to the connexin family. Delta-type subfamily. As to quaternary structure, a connexon is composed of a hexamer of connexins.

The protein resides in the cell membrane. The protein localises to the cell junction. It localises to the gap junction. One gap junction consists of a cluster of closely packed pairs of transmembrane channels, the connexons, through which materials of low MW diffuse from one cell to a neighboring cell. The chain is Gap junction delta-2 protein (GJD2) from Bos taurus (Bovine).